We begin with the raw amino-acid sequence, 158 residues long: MVSYNVLTKLFFIFSGGLVFFFFEFFLNHFNYYPTKLLYYITFYFIKNHPSLFLLFNFFLSTASFSYSFPSKSHLTFYSKGAPSVFFLSLKSSPCPGYCSSTLLYSTSNLLPSLPSPLHAPPPLGSRLLHVFFYRRSNASAYPSFTPRYSFFPSFTLR.

The next 2 helical transmembrane spans lie at Leu10–Phe30 and Tyr40–Leu60.

Its subcellular location is the membrane. This is an uncharacterized protein from Schizosaccharomyces pombe (strain 972 / ATCC 24843) (Fission yeast).